Consider the following 318-residue polypeptide: Formimidoylglutamase (318 aa).

Residues histidine 130, aspartate 155, histidine 157, aspartate 159, aspartate 246, and aspartate 248 each coordinate Mn(2+).

It belongs to the arginase family. It depends on Mn(2+) as a cofactor.

The catalysed reaction is N-formimidoyl-L-glutamate + H2O = formamide + L-glutamate. The protein operates within amino-acid degradation; L-histidine degradation into L-glutamate; L-glutamate from N-formimidoyl-L-glutamate (hydrolase route): step 1/1. In terms of biological role, catalyzes the conversion of N-formimidoyl-L-glutamate to L-glutamate and formamide. This chain is Formimidoylglutamase, found in Klebsiella pneumoniae (strain 342).